The sequence spans 314 residues: Malate dehydrogenase (314 aa).

Residues 12-17 (GSGFTG) and Asp36 each bind NAD(+). Positions 87 and 93 each coordinate substrate. NAD(+) contacts are provided by residues Asn100 and 123–125 (LTN). Asn125 serves as a coordination point for substrate. Position 149 is a phosphoserine (Ser149). Residue Arg156 coordinates substrate. His180 acts as the Proton acceptor in catalysis.

Belongs to the LDH/MDH superfamily. MDH type 3 family.

The catalysed reaction is (S)-malate + NAD(+) = oxaloacetate + NADH + H(+). Functionally, catalyzes the reversible oxidation of malate to oxaloacetate. The sequence is that of Malate dehydrogenase from Shouchella clausii (strain KSM-K16) (Alkalihalobacillus clausii).